The following is a 254-amino-acid chain: Probable electron transfer flavoprotein subunit beta (254 aa).

This sequence belongs to the ETF beta-subunit/FixA family. In terms of assembly, heterodimer of an alpha and a beta subunit. Requires FAD as cofactor. AMP is required as a cofactor.

It localises to the mitochondrion matrix. The electron transfer flavoprotein serves as a specific electron acceptor for several dehydrogenases, including five acyl-CoA dehydrogenases, glutaryl-CoA and sarcosine dehydrogenase. It transfers the electrons to the main mitochondrial respiratory chain via ETF-ubiquinone oxidoreductase (ETF dehydrogenase). The chain is Probable electron transfer flavoprotein subunit beta from Schizosaccharomyces pombe (strain 972 / ATCC 24843) (Fission yeast).